An 837-amino-acid chain; its full sequence is Striatin-interacting protein 1 (837 aa).

Met1 is subject to N-acetylmethionine. Disordered regions lie at residues Met1–Asp67 and Ala333–Pro423. Pro residues predominate over residues Pro18 to Ala35. A compositionally biased stretch (low complexity) spans Pro36–Gly46. Over residues Lys47–Glu60 the composition is skewed to basic and acidic residues. Ser59, Ser335, and Ser339 each carry phosphoserine. Basic and acidic residues predominate over residues Lys356 to Asp377. Over residues Ser378–Leu391 the composition is skewed to acidic residues. The residue at position 788 (Ser788) is a Phosphoserine. The required for STRIPAK core complex formation stretch occupies residues Asp796–Gln837.

This sequence belongs to the STRIP family. Part of the core of STRIPAK complexes composed of PP2A catalytic and scaffolding subunits, the striatins (PP2A regulatory subunits), the striatin-associated proteins MOB4, STRIP1 and STRIP2, PDCD10 and members of the STE20 kinases, such as STK24 and STK26. The STRIPAK complex can be extended by adapter proteins such as SLMAP:SIKE1, CTTNBP2 or CTTNBP2NL. Interacts with CDC42BPB. Interacts with CTTNBP2NL.

The protein localises to the cytoplasm. In terms of biological role, plays a role in the regulation of cell morphology and cytoskeletal organization. Required in the cortical actin filament dynamics and cell shape. Part of the striatin-interacting phosphatase and kinase (STRIPAK) complexes. STRIPAK complexes have critical roles in protein (de)phosphorylation and are regulators of multiple signaling pathways including Hippo, MAPK, nuclear receptor and cytoskeleton remodeling. Different types of STRIPAK complexes are involved in a variety of biological processes such as cell growth, differentiation, apoptosis, metabolism and immune regulation. The protein is Striatin-interacting protein 1 of Homo sapiens (Human).